Consider the following 177-residue polypeptide: Alkyl hydroperoxide reductase AhpD (177 aa).

Residue cysteine 130 is the Proton donor of the active site. The cysteines at positions 130 and 133 are disulfide-linked. Cysteine 133 (cysteine sulfenic acid (-SOH) intermediate) is an active-site residue.

It belongs to the AhpD family. Homotrimer.

The enzyme catalyses N(6)-[(R)-dihydrolipoyl]-L-lysyl-[lipoyl-carrier protein] + a hydroperoxide = N(6)-[(R)-lipoyl]-L-lysyl-[lipoyl-carrier protein] + an alcohol + H2O. In terms of biological role, antioxidant protein with alkyl hydroperoxidase activity. Required for the reduction of the AhpC active site cysteine residues and for the regeneration of the AhpC enzyme activity. This is Alkyl hydroperoxide reductase AhpD from Mycolicibacterium smegmatis (strain ATCC 700084 / mc(2)155) (Mycobacterium smegmatis).